The sequence spans 663 residues: UvrABC system protein B (663 aa).

The span at 1–10 shows a compositional bias: basic and acidic residues; that stretch reads MIDKRDDKPF. A disordered region spans residues 1-23; sequence MIDKRDDKPFKLKSKYKPSGDQP. Residues 31 to 271 enclose the Helicase ATP-binding domain; sequence DNIEGGEKAQ…EQSIAKIQAE (241 aa). 44 to 51 contacts ATP; sequence GATGTGKT. A Beta-hairpin motif is present at residues 97 to 120; sequence YYDYYQPEAYVPSSDTYIEKDSSV. In terms of domain architecture, Helicase C-terminal spans 435–601; it reads QMDDLLGEIN…TIKKDIRGLI (167 aa). The 36-residue stretch at 627–662 folds into the UVR domain; sequence KEAINALQKQMQEAAELLDFELAAQMRDLILELKLM.

Belongs to the UvrB family. In terms of assembly, forms a heterotetramer with UvrA during the search for lesions. Interacts with UvrC in an incision complex.

The protein localises to the cytoplasm. Functionally, the UvrABC repair system catalyzes the recognition and processing of DNA lesions. A damage recognition complex composed of 2 UvrA and 2 UvrB subunits scans DNA for abnormalities. Upon binding of the UvrA(2)B(2) complex to a putative damaged site, the DNA wraps around one UvrB monomer. DNA wrap is dependent on ATP binding by UvrB and probably causes local melting of the DNA helix, facilitating insertion of UvrB beta-hairpin between the DNA strands. Then UvrB probes one DNA strand for the presence of a lesion. If a lesion is found the UvrA subunits dissociate and the UvrB-DNA preincision complex is formed. This complex is subsequently bound by UvrC and the second UvrB is released. If no lesion is found, the DNA wraps around the other UvrB subunit that will check the other stand for damage. This chain is UvrABC system protein B, found in Streptococcus pyogenes serotype M4 (strain MGAS10750).